We begin with the raw amino-acid sequence, 211 residues long: WW domain-containing protein WWM1 (211 aa).

Positions 9–43 constitute a WW domain; it reads PQVPSGWKAVFDDEYQTWYYVDLSTNSSQWEPPRG. A disordered region spans residues 32-116; that stretch reads STNSSQWEPP…QRYYPQQAPM (85 aa). Glycyl lysine isopeptide (Lys-Gly) (interchain with G-Cter in ubiquitin) cross-links involve residues lysine 50 and lysine 60. Phosphoserine is present on serine 75. Threonine 78 bears the Phosphothreonine mark. Positions 80–116 are enriched in low complexity; it reads QVQAGAQAQQPRYYQPQQPQYPQYPQQQRYYPQQAPM.

Interacts with metacaspase MCA1.

Its subcellular location is the cytoplasm. The protein localises to the nucleus. It localises to the mitochondrion. In terms of biological role, involved in apoptosis. May play a role in nuclear function controlling cellular proliferation coupled to mitochondrial biogenesis. Causes impaired growth when overexpressed. The chain is WW domain-containing protein WWM1 (WWM1) from Saccharomyces cerevisiae (strain ATCC 204508 / S288c) (Baker's yeast).